Consider the following 580-residue polypeptide: Tripeptidyl-peptidase sed5 (580 aa).

The disordered stretch occupies residues 1–21; it reads MYPLDGSARPHPPGTTRLNSV. The Peptidase S53 domain occupies 181-567; the sequence is RAQRLIVAEL…RRTLEELRRI (387 aa). An N-linked (GlcNAc...) asparagine glycan is attached at asparagine 236. Catalysis depends on charge relay system residues glutamate 269, aspartate 273, and serine 479. Ca(2+)-binding residues include aspartate 523 and isoleucine 524. Residue asparagine 529 is glycosylated (N-linked (GlcNAc...) asparagine). Residues glycine 543, glycine 545, and aspartate 547 each contribute to the Ca(2+) site.

Ca(2+) is required as a cofactor.

It is found in the secreted. The protein localises to the extracellular space. The catalysed reaction is Release of an N-terminal tripeptide from a polypeptide.. In terms of biological role, secreted tripeptidyl-peptidase which degrades proteins at acidic pHs and is involved in virulence. The polypeptide is Tripeptidyl-peptidase sed5 (sed5) (Aspergillus fumigatus (strain ATCC MYA-4609 / CBS 101355 / FGSC A1100 / Af293) (Neosartorya fumigata)).